Reading from the N-terminus, the 399-residue chain is Zinc finger TRAF-type-containing protein 1 (399 aa).

Positions 1 to 13 (MSGAEEAGGGGPA) are enriched in gly residues. A disordered region spans residues 1–21 (MSGAEEAGGGGPAAGPAGAVP). Residues 106–151 (CTVCLDLPKASVYQCTNGHLMCAGCFIHLLADARLKEEQATCPNCR) form an RING-type; degenerate zinc finger. A TRAF-type zinc finger spans residues 152-210 (CEISKSLCCRNLAVEKAVSELPSECGFCLRQFPRSLLERHQKEECQDRVTQCKYKRIGC).

Belongs to the ZFTRAF1 family. As to quaternary structure, interacts with LGALS3. In terms of tissue distribution, expressed in heart, brain, liver, testis and kidney.

It is found in the cytoplasm. It localises to the perinuclear region. The protein is Zinc finger TRAF-type-containing protein 1 of Mus musculus (Mouse).